We begin with the raw amino-acid sequence, 150 residues long: uncharacterized protein (150 aa).

4 helical membrane-spanning segments follow: residues 12 to 30 (IVQR…YFLF), 40 to 62 (RLLS…LVLF), 74 to 96 (IRRT…VLSG), and 106 to 128 (ALID…SRAV).

It localises to the cell membrane. This is an uncharacterized protein from Archaeoglobus fulgidus (strain ATCC 49558 / DSM 4304 / JCM 9628 / NBRC 100126 / VC-16).